Consider the following 262-residue polypeptide: Adenosylcobinamide-GDP ribazoletransferase (262 aa).

Transmembrane regions (helical) follow at residues 11–31 (LNLF…SWVI), 43–63 (YFGL…WFTQ), 66–86 (LPTS…TGGF), 121–141 (AIVL…LALF), 146–166 (AITG…SLIF), and 199–219 (IFVL…SLWA).

It belongs to the CobS family. Mg(2+) serves as cofactor.

Its subcellular location is the cell inner membrane. The enzyme catalyses alpha-ribazole + adenosylcob(III)inamide-GDP = adenosylcob(III)alamin + GMP + H(+). It carries out the reaction alpha-ribazole 5'-phosphate + adenosylcob(III)inamide-GDP = adenosylcob(III)alamin 5'-phosphate + GMP + H(+). It participates in cofactor biosynthesis; adenosylcobalamin biosynthesis; adenosylcobalamin from cob(II)yrinate a,c-diamide: step 7/7. Joins adenosylcobinamide-GDP and alpha-ribazole to generate adenosylcobalamin (Ado-cobalamin). Also synthesizes adenosylcobalamin 5'-phosphate from adenosylcobinamide-GDP and alpha-ribazole 5'-phosphate. This Shewanella denitrificans (strain OS217 / ATCC BAA-1090 / DSM 15013) protein is Adenosylcobinamide-GDP ribazoletransferase.